A 182-amino-acid chain; its full sequence is ATP-dependent protease subunit HslV (182 aa).

The active site involves threonine 9. Na(+) is bound by residues alanine 167, cysteine 170, and threonine 173.

This sequence belongs to the peptidase T1B family. HslV subfamily. As to quaternary structure, a double ring-shaped homohexamer of HslV is capped on each side by a ring-shaped HslU homohexamer. The assembly of the HslU/HslV complex is dependent on binding of ATP.

It is found in the cytoplasm. It catalyses the reaction ATP-dependent cleavage of peptide bonds with broad specificity.. With respect to regulation, allosterically activated by HslU binding. Protease subunit of a proteasome-like degradation complex believed to be a general protein degrading machinery. The sequence is that of ATP-dependent protease subunit HslV from Enterococcus faecalis (strain ATCC 700802 / V583).